The following is a 122-amino-acid chain: Large ribosomal subunit protein uL14 (122 aa).

Belongs to the universal ribosomal protein uL14 family. Part of the 50S ribosomal subunit. Forms a cluster with proteins L3 and L19. In the 70S ribosome, L14 and L19 interact and together make contacts with the 16S rRNA in bridges B5 and B8.

In terms of biological role, binds to 23S rRNA. Forms part of two intersubunit bridges in the 70S ribosome. This chain is Large ribosomal subunit protein uL14, found in Anaeromyxobacter dehalogenans (strain 2CP-1 / ATCC BAA-258).